A 64-amino-acid polypeptide reads, in one-letter code: Large ribosomal subunit protein bL35 (64 aa).

This sequence belongs to the bacterial ribosomal protein bL35 family.

The protein is Large ribosomal subunit protein bL35 of Vibrio campbellii (strain ATCC BAA-1116).